The primary structure comprises 694 residues: Polyribonucleotide nucleotidyltransferase (694 aa).

The Mg(2+) site is built by Asp486 and Asp492. The KH domain maps to Pro553–Ile612. In terms of domain architecture, S1 motif spans Gly622 to Lys690.

This sequence belongs to the polyribonucleotide nucleotidyltransferase family. Mg(2+) serves as cofactor.

Its subcellular location is the cytoplasm. It catalyses the reaction RNA(n+1) + phosphate = RNA(n) + a ribonucleoside 5'-diphosphate. Functionally, involved in mRNA degradation. Catalyzes the phosphorolysis of single-stranded polyribonucleotides processively in the 3'- to 5'-direction. This is Polyribonucleotide nucleotidyltransferase from Chlamydia pneumoniae (Chlamydophila pneumoniae).